Consider the following 460-residue polypeptide: tRNA modification GTPase MnmE (460 aa).

Residues Arg-29, Glu-91, and Arg-131 each coordinate (6S)-5-formyl-5,6,7,8-tetrahydrofolate. Residues 226 to 383 (GLRVALVGRP…LVQAVLERCG (158 aa)) enclose the TrmE-type G domain. K(+) is bound at residue Asn-236. GTP is bound by residues 236–241 (NVGKSS), 255–261 (TDLPGTT), and 280–283 (DTAG). Ser-240 is a Mg(2+) binding site. The K(+) site is built by Thr-255, Leu-257, and Thr-260. Thr-261 contacts Mg(2+). (6S)-5-formyl-5,6,7,8-tetrahydrofolate is bound at residue Lys-460.

Belongs to the TRAFAC class TrmE-Era-EngA-EngB-Septin-like GTPase superfamily. TrmE GTPase family. As to quaternary structure, homodimer. Heterotetramer of two MnmE and two MnmG subunits. K(+) serves as cofactor.

It is found in the cytoplasm. In terms of biological role, exhibits a very high intrinsic GTPase hydrolysis rate. Involved in the addition of a carboxymethylaminomethyl (cmnm) group at the wobble position (U34) of certain tRNAs, forming tRNA-cmnm(5)s(2)U34. In Synechococcus sp. (strain WH7803), this protein is tRNA modification GTPase MnmE.